A 248-amino-acid chain; its full sequence is MLIFFELGNSQLKAATILKGNYQFLGSVRHDAILSGEFIESFNLNEQNPTAVYVSSVAPSQLNAALTEVIQQHFKLYPTFLATQPSCCGIECGYEKFDQFGVDRWMAILGACSGSNKPTFIVDAGTALTVDAVIDKKHIGGFIVPGLGLMRDSLLKNTALSEQSLVLQSVQDGLLAKDTAGGVMGGTLYMLGSYLNSLLVDLELETGRKFDCIGTGGDFLSLKPVLDKPYNYVEDLTLRGMKEVIESL.

6 to 13 (ELGNSQLK) lines the ATP pocket. Substrate is bound by residues Tyr-94 and 101–104 (GVDR). Residue Asp-103 is the Proton acceptor of the active site. Asp-123 contacts K(+). Thr-126 contacts ATP. A substrate-binding site is contributed by Thr-179.

This sequence belongs to the type III pantothenate kinase family. Homodimer. The cofactor is NH4(+). It depends on K(+) as a cofactor.

The protein localises to the cytoplasm. The enzyme catalyses (R)-pantothenate + ATP = (R)-4'-phosphopantothenate + ADP + H(+). It functions in the pathway cofactor biosynthesis; coenzyme A biosynthesis; CoA from (R)-pantothenate: step 1/5. In terms of biological role, catalyzes the phosphorylation of pantothenate (Pan), the first step in CoA biosynthesis. The protein is Type III pantothenate kinase of Hydrogenovibrio crunogenus (strain DSM 25203 / XCL-2) (Thiomicrospira crunogena).